A 432-amino-acid chain; its full sequence is MAIWLERASADFEQKFAAFLTTKREVSEDVNATVRDIINDVRHRGDAALAHYSQKFDGIDFTRVSMRVTADEIDAAFSAVDRAVIEALELAARRIEKHHARQMPKDDIYEDDIGVGLGSRWTAIEAVGLYVPGGTASYPSSVLMNAVPAKVAGVERIVMVVPANGGAVNPAVLAAARIAGVEEIYRIGGAQAVAALAYGTETIAPVAKIVGPGNAYVAAAKRQVFGTVGIDMIAGPSEVLVIADKDNDPDWLAADLLAQAEHDRGAQSILITDNADLGKAVGAAVERQLKLLSRSETAAASWADFGAIILVEKLTDAIPLANRIAAEHLELAVDDPDALMAHIRNAGAIFVGRHTPEVIGDYVGGSNHVLPTARSARFSSGLSVLDFVKRTSILRLGPEQLRQLAPAAITLAHSEGLDAHARSVSIRLNPES.

3 residues coordinate NAD(+): tyrosine 130, glutamine 191, and asparagine 214. Substrate is bound by residues serine 237, glutamine 259, and histidine 262. Glutamine 259 and histidine 262 together coordinate Zn(2+). Catalysis depends on proton acceptor residues glutamate 327 and histidine 328. Substrate contacts are provided by histidine 328, aspartate 361, glutamate 415, and histidine 420. Aspartate 361 lines the Zn(2+) pocket. Residue histidine 420 participates in Zn(2+) binding.

It belongs to the histidinol dehydrogenase family. The cofactor is Zn(2+).

It catalyses the reaction L-histidinol + 2 NAD(+) + H2O = L-histidine + 2 NADH + 3 H(+). The protein operates within amino-acid biosynthesis; L-histidine biosynthesis; L-histidine from 5-phospho-alpha-D-ribose 1-diphosphate: step 9/9. Functionally, catalyzes the sequential NAD-dependent oxidations of L-histidinol to L-histidinaldehyde and then to L-histidine. The polypeptide is Histidinol dehydrogenase (Agrobacterium fabrum (strain C58 / ATCC 33970) (Agrobacterium tumefaciens (strain C58))).